The primary structure comprises 195 residues: CDP-diacylglycerol--glycerol-3-phosphate 3-phosphatidyltransferase (195 aa).

Helical transmembrane passes span 7–24 (ITVL…LFYL), 60–81 (FGAF…VLLV), 134–150 (MLAL…FTFW), and 157–173 (FLLI…LQYL).

Belongs to the CDP-alcohol phosphatidyltransferase class-I family.

The protein localises to the cell membrane. It catalyses the reaction a CDP-1,2-diacyl-sn-glycerol + sn-glycerol 3-phosphate = a 1,2-diacyl-sn-glycero-3-phospho-(1'-sn-glycero-3'-phosphate) + CMP + H(+). It participates in phospholipid metabolism; phosphatidylglycerol biosynthesis; phosphatidylglycerol from CDP-diacylglycerol: step 1/2. In terms of biological role, this protein catalyzes the committed step to the synthesis of the acidic phospholipids. The sequence is that of CDP-diacylglycerol--glycerol-3-phosphate 3-phosphatidyltransferase (pgsA) from Pseudomonas fluorescens.